The sequence spans 291 residues: Ribonuclease Z (291 aa).

Residues histidine 61, histidine 63, aspartate 65, histidine 66, histidine 133, aspartate 201, and histidine 257 each contribute to the Zn(2+) site. Residue aspartate 65 is the Proton acceptor of the active site.

This sequence belongs to the RNase Z family. As to quaternary structure, homodimer. Zn(2+) serves as cofactor.

The catalysed reaction is Endonucleolytic cleavage of RNA, removing extra 3' nucleotides from tRNA precursor, generating 3' termini of tRNAs. A 3'-hydroxy group is left at the tRNA terminus and a 5'-phosphoryl group is left at the trailer molecule.. In terms of biological role, zinc phosphodiesterase, which displays some tRNA 3'-processing endonuclease activity. Probably involved in tRNA maturation, by removing a 3'-trailer from precursor tRNA. This Saccharolobus solfataricus (strain ATCC 35092 / DSM 1617 / JCM 11322 / P2) (Sulfolobus solfataricus) protein is Ribonuclease Z.